Consider the following 676-residue polypeptide: Methionine--tRNA ligase (676 aa).

Positions 15-25 (PYANGPIHLGH) match the 'HIGH' region motif. Residues Cys-146, Cys-149, Cys-159, and Cys-162 each contribute to the Zn(2+) site. A 'KMSKS' region motif is present at residues 332-336 (KMSKS). An ATP-binding site is contributed by Lys-335. In terms of domain architecture, tRNA-binding spans 575 to 676 (DFAKIDLRIA…EGAQPGMRVK (102 aa)).

This sequence belongs to the class-I aminoacyl-tRNA synthetase family. MetG type 1 subfamily. In terms of assembly, homodimer. Zn(2+) is required as a cofactor.

The protein resides in the cytoplasm. It catalyses the reaction tRNA(Met) + L-methionine + ATP = L-methionyl-tRNA(Met) + AMP + diphosphate. Functionally, is required not only for elongation of protein synthesis but also for the initiation of all mRNA translation through initiator tRNA(fMet) aminoacylation. The sequence is that of Methionine--tRNA ligase from Shewanella sp. (strain MR-7).